A 77-amino-acid chain; its full sequence is Small ribosomal subunit protein bS21 (77 aa).

The span at 38–52 shows a compositional bias: basic and acidic residues; it reads KPSEKRAREKAEAVR. The tract at residues 38-77 is disordered; that stretch reads KPSEKRAREKAEAVRRTRKLARKRAQREGLISNGRGSPLK. A compositionally biased stretch (basic residues) spans 53–62; the sequence is RTRKLARKRA.

This sequence belongs to the bacterial ribosomal protein bS21 family.

The polypeptide is Small ribosomal subunit protein bS21 (Bartonella henselae (strain ATCC 49882 / DSM 28221 / CCUG 30454 / Houston 1) (Rochalimaea henselae)).